We begin with the raw amino-acid sequence, 248 residues long: Probable transcriptional regulatory protein Noc_0137 (248 aa).

This sequence belongs to the TACO1 family.

Its subcellular location is the cytoplasm. The chain is Probable transcriptional regulatory protein Noc_0137 from Nitrosococcus oceani (strain ATCC 19707 / BCRC 17464 / JCM 30415 / NCIMB 11848 / C-107).